Reading from the N-terminus, the 521-residue chain is Bifunctional purine biosynthesis protein PurH (521 aa).

An MGS-like domain is found at 1–150 (MSEDRKAIKR…KNHPSVAVVT (150 aa)).

It belongs to the PurH family.

It carries out the reaction (6R)-10-formyltetrahydrofolate + 5-amino-1-(5-phospho-beta-D-ribosyl)imidazole-4-carboxamide = 5-formamido-1-(5-phospho-D-ribosyl)imidazole-4-carboxamide + (6S)-5,6,7,8-tetrahydrofolate. It catalyses the reaction IMP + H2O = 5-formamido-1-(5-phospho-D-ribosyl)imidazole-4-carboxamide. The protein operates within purine metabolism; IMP biosynthesis via de novo pathway; 5-formamido-1-(5-phospho-D-ribosyl)imidazole-4-carboxamide from 5-amino-1-(5-phospho-D-ribosyl)imidazole-4-carboxamide (10-formyl THF route): step 1/1. Its pathway is purine metabolism; IMP biosynthesis via de novo pathway; IMP from 5-formamido-1-(5-phospho-D-ribosyl)imidazole-4-carboxamide: step 1/1. The chain is Bifunctional purine biosynthesis protein PurH from Corynebacterium efficiens (strain DSM 44549 / YS-314 / AJ 12310 / JCM 11189 / NBRC 100395).